We begin with the raw amino-acid sequence, 157 residues long: SsrA-binding protein (157 aa).

The protein belongs to the SmpB family.

It is found in the cytoplasm. Its function is as follows. Required for rescue of stalled ribosomes mediated by trans-translation. Binds to transfer-messenger RNA (tmRNA), required for stable association of tmRNA with ribosomes. tmRNA and SmpB together mimic tRNA shape, replacing the anticodon stem-loop with SmpB. tmRNA is encoded by the ssrA gene; the 2 termini fold to resemble tRNA(Ala) and it encodes a 'tag peptide', a short internal open reading frame. During trans-translation Ala-aminoacylated tmRNA acts like a tRNA, entering the A-site of stalled ribosomes, displacing the stalled mRNA. The ribosome then switches to translate the ORF on the tmRNA; the nascent peptide is terminated with the 'tag peptide' encoded by the tmRNA and targeted for degradation. The ribosome is freed to recommence translation, which seems to be the essential function of trans-translation. The sequence is that of SsrA-binding protein from Elusimicrobium minutum (strain Pei191).